The chain runs to 316 residues: Acetyl-coenzyme A carboxylase carboxyl transferase subunit beta, chloroplastic (316 aa).

A CoA carboxyltransferase N-terminal domain is found at 47–316 (LWTRCDNCEN…CKKFQNSFFK (270 aa)). Zn(2+)-binding residues include Cys-51, Cys-54, Cys-70, and Cys-73. Residues 51–73 (CDNCENMLYVRFLRQNKRICEEC) form a C4-type zinc finger.

This sequence belongs to the AccD/PCCB family. In terms of assembly, acetyl-CoA carboxylase is a heterohexamer composed of biotin carboxyl carrier protein, biotin carboxylase and 2 subunits each of ACCase subunit alpha and ACCase plastid-coded subunit beta (accD). Zn(2+) serves as cofactor.

Its subcellular location is the plastid. The protein resides in the chloroplast stroma. The enzyme catalyses N(6)-carboxybiotinyl-L-lysyl-[protein] + acetyl-CoA = N(6)-biotinyl-L-lysyl-[protein] + malonyl-CoA. It functions in the pathway lipid metabolism; malonyl-CoA biosynthesis; malonyl-CoA from acetyl-CoA: step 1/1. Its function is as follows. Component of the acetyl coenzyme A carboxylase (ACC) complex. Biotin carboxylase (BC) catalyzes the carboxylation of biotin on its carrier protein (BCCP) and then the CO(2) group is transferred by the transcarboxylase to acetyl-CoA to form malonyl-CoA. In Marchantia polymorpha (Common liverwort), this protein is Acetyl-coenzyme A carboxylase carboxyl transferase subunit beta, chloroplastic.